We begin with the raw amino-acid sequence, 529 residues long: Probable serine/threonine protein phosphatase 2A regulatory subunit B''epsilon (529 aa).

Positions 60 to 110 (KSGTPTNKSKNLPSVFLSSSTPPLSPRSSSGSPRFSRQRTSPPSLHSPLRS) are disordered. The segment covering 71–109 (LPSVFLSSSTPPLSPRSSSGSPRFSRQRTSPPSLHSPLR) has biased composition (low complexity). The 36-residue stretch at 381–416 (SSEPSLEYWFKCVDLDGNGVITSNEMQFFFEEQLHR) folds into the EF-hand domain. Residues D394, D396, N398, and E405 each coordinate Ca(2+). The segment at 507-529 (EEDVDEVSNGSADVWDEPLEPPF) is disordered. Residues 520–529 (VWDEPLEPPF) are compositionally biased toward acidic residues.

PP2A consists of a common heterodimeric core enzyme, composed of a 36 kDa catalytic subunit (subunit C) and a 65 kDa constant regulatory subunit (PR65 or subunit A), that associates with a variety of regulatory subunits. Proteins that associate with the core dimer include three families of regulatory subunits B (the R2/B/PR55/B55, R3/B''/PR72/PR130/PR59 and R5/B'/B56 families) and cell signaling molecules.

Probable regulatory subunit of type 2A protein phosphatase. This Arabidopsis thaliana (Mouse-ear cress) protein is Probable serine/threonine protein phosphatase 2A regulatory subunit B''epsilon (B''EPSILON).